Consider the following 740-residue polypeptide: F-BAR and double SH3 domains protein 2 (740 aa).

The 275-residue stretch at 8–282 (VKVTQELKNI…NSSKVVRDYN (275 aa)) folds into the F-BAR domain. A disordered region spans residues 303-323 (PCDSDTSRQLESETGTTEEHS). Positions 307–323 (DTSRQLESETGTTEEHS) are enriched in basic and acidic residues. A coiled-coil region spans residues 356 to 397 (GAAVSEQSRAELEQKIDEARENIRKAEIIKLKAEARLDLLKQ). SH3 domains lie at 469–530 (NYPL…FPTS) and 567–629 (ASVC…ELSA). Positions 567-629 (ASVCFVKALY…PSVLVEELSA (63 aa)) are required and sufficient for location at clathrin-coated pits. Residues 633–740 (GDTPWMREIQ…KIEDVEITLV (108 aa)) form a disordered region. Over residues 646-657 (SPKPHASLPPLP) the composition is skewed to pro residues. Residues serine 675 and serine 681 each carry the phosphoserine modification.

As to quaternary structure, homodimer. Interacts (via SH3 domain 2) with ITSN1 (via SH3 domain 4). Recruited to clathrin-coated pits during a mid-to-late stage of assembly via interaction with ITSN1. Interacts (via SH3 domain 1) with WASL. Interacts with WAS. Interacts with CASK and MAGI1. CASK inhibits interaction with MAGI1. Phosphorylated. Phosphorylation on a Ser residue is important for recruitment to the cell membrane and for its role in promoting endocytosis. Liver, brain, heart, placenta, skeletal muscle, pancreas, lung and kidney.

The protein localises to the cytoplasm. It is found in the cell junction. The protein resides in the membrane. Its subcellular location is the clathrin-coated pit. It localises to the cell membrane. The protein localises to the cell projection. It is found in the stereocilium. Adapter protein that plays a role in endocytosis via clathrin-coated pits. Contributes to the internalization of cell surface receptors, such as integrin ITGB1 and transferrin receptor. Promotes endocytosis of EGFR in cancer cells, and thereby contributes to the down-regulation of EGFR signaling. Recruited to clathrin-coated pits during a mid-to-late stage of assembly, where it is required for normal progress from U-shaped intermediate stage pits to terminal, omega-shaped pits. Binds to membranes enriched in phosphatidylinositol 3,4-bisphosphate or phosphatidylinositol 3,4,5-trisphosphate. When bound to membranes, promotes actin polymerization via its interaction with WAS and/or WASL which leads to the activation of the Arp2/3 complex. Does not promote actin polymerisation in the absence of membranes. In Homo sapiens (Human), this protein is F-BAR and double SH3 domains protein 2 (FCHSD2).